A 315-amino-acid chain; its full sequence is Olfactory receptor 3A2 (315 aa).

At 1-29 the chain is on the extracellular side; the sequence is MEPEAGTNRTAVAEFILLGLVQTEEMQPV. N-linked (GlcNAc...) asparagine glycosylation occurs at N8. Residues 30 to 52 traverse the membrane as a helical segment; that stretch reads VFVLFLFAYLVTIGGNLSILAAI. Over 53 to 60 the chain is Cytoplasmic; it reads LVEPKLHA. Residues 61–82 form a helical membrane-spanning segment; sequence PMYFFLGNLSVLDVGCITVTVP. The Extracellular portion of the chain corresponds to 83-103; the sequence is AMLGRLLSHKSTISYDACLSQ. Cysteines 100 and 192 form a disulfide. The chain crosses the membrane as a helical span at residues 104 to 123; sequence LFFFHLLAGMDCFLLTAMAY. Over 124–143 the chain is Cytoplasmic; sequence DRFLAICWPLTYSTRMSQTV. Residues 144–161 form a helical membrane-spanning segment; sequence QRMLVAASWACAFTNALT. The Extracellular portion of the chain corresponds to 162–199; it reads HTVAMSTLNFCGPNEVNHFYCDLPQLFQLSCSSTQLNE. The helical transmembrane segment at 200 to 223 threads the bilayer; sequence LLLFAVGFIMAGTPLVLIITSYSH. The Cytoplasmic portion of the chain corresponds to 224–240; the sequence is VAAAVLRIRSVEGWKKA. Residues 241–264 form a helical membrane-spanning segment; sequence FSTCGSHLTVVCLFFGTGIFNYMR. Topologically, residues 265-275 are extracellular; that stretch reads LGSEEASDKDK. A helical membrane pass occupies residues 276–295; it reads GVGVFNTVINPMLNPLIYSL. Over 296-315 the chain is Cytoplasmic; it reads RNPDVQGALWRIFLGRRSLT.

It belongs to the G-protein coupled receptor 1 family.

It is found in the cell membrane. Functionally, odorant receptor. This chain is Olfactory receptor 3A2 (OR3A2), found in Pan troglodytes (Chimpanzee).